Here is a 474-residue protein sequence, read N- to C-terminus: Trehalose-6-phosphate synthase (474 aa).

Arginine 10 lines the D-glucose 6-phosphate pocket. Glycine 22–glycine 23 provides a ligand contact to UDP-alpha-D-glucose. Tyrosine 77 and aspartate 131 together coordinate D-glucose 6-phosphate. Positions 263 and 268 each coordinate UDP-alpha-D-glucose. Position 301 (arginine 301) interacts with D-glucose 6-phosphate. UDP-alpha-D-glucose contacts are provided by residues phenylalanine 340 and leucine 366–glutamate 370.

Belongs to the glycosyltransferase 20 family. In terms of assembly, homotetramer.

It carries out the reaction D-glucose 6-phosphate + UDP-alpha-D-glucose = alpha,alpha-trehalose 6-phosphate + UDP + H(+). Its pathway is glycan biosynthesis; trehalose biosynthesis. In terms of biological role, probably involved in the osmoprotection via the biosynthesis of trehalose. Catalyzes the transfer of glucose from UDP-alpha-D-glucose (UDP-Glc) to D-glucose 6-phosphate (Glc-6-P) to form trehalose-6-phosphate. Acts with retention of the anomeric configuration of the UDP-sugar donor. The sequence is that of Trehalose-6-phosphate synthase from Klebsiella pneumoniae subsp. pneumoniae (strain ATCC 700721 / MGH 78578).